Reading from the N-terminus, the 246-residue chain is tRNA pseudouridine synthase A (246 aa).

Asp52 functions as the Nucleophile in the catalytic mechanism. Tyr111 contacts substrate.

The protein belongs to the tRNA pseudouridine synthase TruA family. In terms of assembly, homodimer.

The catalysed reaction is uridine(38/39/40) in tRNA = pseudouridine(38/39/40) in tRNA. Formation of pseudouridine at positions 38, 39 and 40 in the anticodon stem and loop of transfer RNAs. This Borreliella burgdorferi (strain ZS7) (Borrelia burgdorferi) protein is tRNA pseudouridine synthase A.